The following is a 239-amino-acid chain: Endoglucanase A (239 aa).

The signal sequence occupies residues 1-16 (MKLSMTLSLFAATAMG).

Belongs to the glycosyl hydrolase 12 (cellulase H) family.

The catalysed reaction is Endohydrolysis of (1-&gt;4)-beta-D-glucosidic linkages in cellulose, lichenin and cereal beta-D-glucans.. In terms of biological role, has carboxylmethylcellulase activity. The chain is Endoglucanase A (cekA) from Aspergillus kawachii (strain NBRC 4308) (White koji mold).